Consider the following 111-residue polypeptide: Large ribosomal subunit protein eL31 (111 aa).

Belongs to the eukaryotic ribosomal protein eL31 family.

This Tetrahymena thermophila (strain SB210) protein is Large ribosomal subunit protein eL31 (RPL31).